Here is a 104-residue protein sequence, read N- to C-terminus: Large ribosomal subunit protein uL24 (104 aa).

Belongs to the universal ribosomal protein uL24 family. As to quaternary structure, part of the 50S ribosomal subunit.

Its function is as follows. One of two assembly initiator proteins, it binds directly to the 5'-end of the 23S rRNA, where it nucleates assembly of the 50S subunit. One of the proteins that surrounds the polypeptide exit tunnel on the outside of the subunit. The polypeptide is Large ribosomal subunit protein uL24 (Clostridium perfringens (strain SM101 / Type A)).